We begin with the raw amino-acid sequence, 289 residues long: Serine/threonine-protein phosphatase Pgam5, mitochondrial (289 aa).

The helical transmembrane segment at 7-23 threads the bilayer; the sequence is FACGTGAGLAAYYLQRL.

The protein belongs to the phosphoglycerate mutase family. BPG-dependent PGAM subfamily. Interacts with Pk92B/ASK1.

Its subcellular location is the mitochondrion outer membrane. The catalysed reaction is O-phospho-L-seryl-[protein] + H2O = L-seryl-[protein] + phosphate. It carries out the reaction O-phospho-L-threonyl-[protein] + H2O = L-threonyl-[protein] + phosphate. Displays phosphatase activity for serine/threonine residues, and dephosphorylates and activates Pk92B kinase. Has apparently no phosphoglycerate mutase activity. The sequence is that of Serine/threonine-protein phosphatase Pgam5, mitochondrial from Drosophila sechellia (Fruit fly).